A 325-amino-acid polypeptide reads, in one-letter code: Elongation factor P--(R)-beta-lysine ligase (325 aa).

76–78 contributes to the substrate binding site; it reads SPE. ATP-binding positions include 100 to 102 and N109; that span reads RNE. Y118 is a binding site for substrate. Residue 244 to 245 coordinates ATP; that stretch reads EL. E251 serves as a coordination point for substrate. Residue G300 participates in ATP binding.

It belongs to the class-II aminoacyl-tRNA synthetase family. EpmA subfamily. Homodimer.

It catalyses the reaction D-beta-lysine + L-lysyl-[protein] + ATP = N(6)-((3R)-3,6-diaminohexanoyl)-L-lysyl-[protein] + AMP + diphosphate + H(+). With EpmB is involved in the beta-lysylation step of the post-translational modification of translation elongation factor P (EF-P) on 'Lys-34'. Catalyzes the ATP-dependent activation of (R)-beta-lysine produced by EpmB, forming a lysyl-adenylate, from which the beta-lysyl moiety is then transferred to the epsilon-amino group of EF-P 'Lys-34'. This chain is Elongation factor P--(R)-beta-lysine ligase, found in Salmonella paratyphi A (strain ATCC 9150 / SARB42).